The primary structure comprises 460 residues: MNSASAHDLRLLEVDKEKQDPKSPRGALEACLTRCSISSASSSSDDPPPNREAIDNADADTDVQCKNHRASSNWGKFFKLWKRRSMKRLSSFPPLSGAAPPIIKQNKSADPNMNGMVLHDIYDFQSSLQNFSISDIEIATDNFSPENIIGRGGYADVYQGILPEGKLIAVKRLTKGTPDEQTAEFLSELGIIAHVDHPNTAKFIGCCIEGGMHLVFRLSPLGSLGSLLHGPSKYKLTWSRRYNVALGTADGLVYLHEGCQRRIIHRDIKADNILLTEDFQPQICDFGLAKWLPKQLTHHNVSKFEGTFGYFAPEYFMHGIVDEKTDVFAFGVLLLELITGHPALDESQQSLVLWAKPLLERKAIKELVDPSLGDEYNREELIRLTSTASLCIDQSSLLRPRMSQVVELLLGHEDVVMTPREAKIKMMQRTYSEELLDSVEYNSTKYLGDLDRIREVALAS.

Positions 1-67 are disordered; it reads MNSASAHDLR…DADTDVQCKN (67 aa). The span at 7 to 23 shows a compositional bias: basic and acidic residues; sequence HDLRLLEVDKEKQDPKS. The Protein kinase domain occupies 143 to 415; it reads FSPENIIGRG…VELLLGHEDV (273 aa). Residues 149–157 and K171 each bind ATP; that span reads IGRGGYADV. The Proton acceptor role is filled by D267. At T307 the chain carries Phosphothreonine. Y315 carries the post-translational modification Phosphotyrosine.

The protein belongs to the protein kinase superfamily. Ser/Thr protein kinase family. As to quaternary structure, interacts with ARAC5 and ARAC10.

It is found in the cytoplasm. It carries out the reaction L-seryl-[protein] + ATP = O-phospho-L-seryl-[protein] + ADP + H(+). The catalysed reaction is L-threonyl-[protein] + ATP = O-phospho-L-threonyl-[protein] + ADP + H(+). This chain is Receptor-like cytosolic serine/threonine-protein kinase RBK2 (RBK2), found in Arabidopsis thaliana (Mouse-ear cress).